A 242-amino-acid chain; its full sequence is Spiralin (242 aa).

The signal sequence occupies residues 1-23 (MKKLLSILAVFGVSAVGTTSVVA). Residue C24 is the site of N-palmitoyl cysteine attachment. C24 carries the S-diacylglycerol cysteine lipid modification.

Belongs to the spiralin family. As to quaternary structure, seems to occur as dimer, tetramers, and large oligomers of identical chains. Palmitate and stearate are the major lipid components.

The protein resides in the cell membrane. Functionally, major membrane protein of spiroplasma. The polypeptide is Spiralin (spi) (Spiroplasma melliferum).